The primary structure comprises 121 residues: Small ribosomal subunit protein uS13 (121 aa).

Residues Arg92–Lys121 form a disordered region.

Belongs to the universal ribosomal protein uS13 family. As to quaternary structure, part of the 30S ribosomal subunit. Forms a loose heterodimer with protein S19. Forms two bridges to the 50S subunit in the 70S ribosome.

Its function is as follows. Located at the top of the head of the 30S subunit, it contacts several helices of the 16S rRNA. In the 70S ribosome it contacts the 23S rRNA (bridge B1a) and protein L5 of the 50S subunit (bridge B1b), connecting the 2 subunits; these bridges are implicated in subunit movement. Contacts the tRNAs in the A and P-sites. The sequence is that of Small ribosomal subunit protein uS13 from Oceanobacillus iheyensis (strain DSM 14371 / CIP 107618 / JCM 11309 / KCTC 3954 / HTE831).